A 66-amino-acid chain; its full sequence is Alpha-conotoxin Vc1a (66 aa).

An N-terminal signal peptide occupies residues 1–25; sequence MGMRMMFTVFLLVVLATTVVSSTSG. Positions 26–47 are excised as a propeptide; it reads RREFRGRNAAAKASDLVSLTDK. 2 disulfide bridges follow: C51–C57 and C52–C65. The interval 53 to 55 is ser-Xaa-Pro motif, crucial for potent interaction with nAChR; sequence SDP. 2 key region for inhibition of alpha-9-alpha-10/CHRNA9-CHRNA10 nAChR regions span residues 54-56 and 60-64; these read DPR and DHPEI. P55 is modified (4-hydroxyproline). E63 bears the 4-carboxyglutamate mark. The residue at position 65 (C65) is a Cysteine amide.

It belongs to the conotoxin A superfamily. Post-translationally, vc1.1 is described as having no post-translational modifications (except C-terminal amidation), whereas Vc1a contains a hydroxyproline at Pro-55 and a 4-carboxyglutamate at Glu-63 (and a C-terminal amidation). In terms of processing, hydroxylation of Pro-55 is not important for inhibition of alpha-9-alpha-10/CHRNA9-CHRNA10 nAChRs, since [P6O]Vc1.1 (Pro-55 hydroxylated) shows similar inhibition than native toxin (IC(50)=99.1 nM). In contrast, hydroxylation of Pro-55 seems to impair inhibition of HVA calcium channel currents, since [P6O]Vc1.1 has no effect on HVA calcium channel currents. In vivo, hydroxylation of Pro-55 seems to induce the loss of analgesic effects in rat models of neuropathic pain, since [P6O]Vc1.1 has no effect on mechanical allodynia. Gamma-carboxylation of Glu-63 is not important for inhibition of alpha-9-alpha-10/CHRNA9-CHRNA10 nAChRs, since [E14gamma]Vc1.1 (carboxyglutamate at Glu-63) shows similar inhibition than native toxin (IC(50)=65.3 nM). In contrast, gamma-carboxylation of Glu-63 seems to impair inhibition of HVA calcium channel currents, since [E14gamma]Vc1.1 has no effect on HVA calcium channel currents. Post-translationally, non-native isomers 'ribbon' (with disulfide connectivity C1-C4; C2-C3) and 'beads' (with disulfide connectivity C1-C2; C3-C4) of Vc1.1 also inhibit HVA calcium channel currents in rat DRG neurons (20-30% inhibition at 1 uM toxin). It has been shown that both reduced and alkylated Vc1.1 have no effect on HVA calcium channel currents. The observed activity can be attributed to specific isomers. In terms of processing, [C3S]Vc1.1(1-8) mutant is C-terminally amidated. In terms of tissue distribution, expressed by the venom duct.

It is found in the secreted. Functionally, alpha-conotoxins act on postsynaptic membranes, they bind to the nicotinic acetylcholine receptors (nAChR) and thus inhibit them. This toxin (native toxin Vc1a; hydroxylated and gamma-carboxylated) blocks alpha-9-alpha-10/CHRNA9-CHRNA10 nAChRs (IC(50)=62.9 nM). In contrast to the non-post-translationally modified analog Vc1.1, Vc1a does not inhibit high voltage-activated (HVA) calcium channel currents. In vivo, in contrast to Vc1.1, Vc1a does not show analgesic effects in rat models of neuropathic pain. Its function is as follows. The synthetic peptide Vc1.1 (a non-hydroxylated and non-gamma-carboxylated analog of Vc1a) has two types of targets. It blocks alpha-9-alpha-10/CHRNA9-CHRNA10 nAChRs (on rat receptors, IC(50)=19-109 nM) (with preference for rat over human receptors) and inhibits high voltage-activated (HVA) calcium channel (Cav2.2, Cav2.3) currents by acting on GABA(B) receptors (GABBR1 and GABBR2) (IC(50)=1.7 nM). It also shows moderate inhibition on alpha-6/alpha-3-beta-2-beta-3 (CHRNA6/CHRNA3-CHRNB2-CHRNB3) (IC(50)=140 nM) and alpha-6/alpha-3-beta-4 (CHRNA6/CHRNA3-CHRNB4) (IC(50)=980 nM). On alpha-9-alpha-10/CHRNA9-CHRNA10 nAChR, it most likely interacts with the alpha-10(+)/alpha-9(-)interface of the receptor. In vivo, it acts as a powerful analgesic in rat models of neuropathic pain. This Conus victoriae (Queen Victoria cone) protein is Alpha-conotoxin Vc1a.